Consider the following 480-residue polypeptide: Iroquois-class homeodomain protein IRX-1 (480 aa).

Positions 127-189 (DPGRPKNATR…NARRRLKKEN (63 aa)) form a DNA-binding region, homeobox; TALE-type. Disordered regions lie at residues 190-285 (KVTW…LGLV), 318-354 (SLAETATSPDGAPKASPPPPSSHASAHGPPSGSPLQH), and 401-480 (PHGP…LPSA). The segment covering 210 to 232 (TEGDPEKAEDDEEIDLESIDIDQ) has biased composition (acidic residues). Ser241 carries the phosphoserine modification. Residues 254–263 (ARVAPPASAR) are compositionally biased toward low complexity. Polar residues predominate over residues 264–280 (DQSSPLSAAETLKSQDS). Over residues 339 to 351 (SHASAHGPPSGSP) the composition is skewed to low complexity.

Belongs to the TALE/IRO homeobox family. As to expression, expressed in specific and overlapping patterns with Irx1 and Irx2 in the developing and adult metanephric kidney. In the adult metanephros, renal expression is found in the loop of Henle in the S3 proximal tubule segment and in the thick ascending limb (TAL) of the distal tubule.

The protein localises to the nucleus. The protein is Iroquois-class homeodomain protein IRX-1 (Irx1) of Mus musculus (Mouse).